The chain runs to 155 residues: Small ribosomal subunit protein uS7c (155 aa).

The protein belongs to the universal ribosomal protein uS7 family. In terms of assembly, part of the 30S ribosomal subunit.

It is found in the plastid. Its subcellular location is the chloroplast. In terms of biological role, one of the primary rRNA binding proteins, it binds directly to 16S rRNA where it nucleates assembly of the head domain of the 30S subunit. The sequence is that of Small ribosomal subunit protein uS7c (rps7) from Allium textile (Textile onion).